The primary structure comprises 455 residues: SUN domain-containing protein 2 (455 aa).

Over residues 1–12 the composition is skewed to polar residues; it reads MSASTVSITASP. The interval 1 to 99 is disordered; the sequence is MSASTVSITA…RTRKSQGNKI (99 aa). Residue serine 2 is modified to N-acetylserine. Residues 2–105 lie on the Nuclear side of the membrane; it reads SASTVSITAS…GNKIDRGKWK (104 aa). Serine 63 bears the Phosphoserine mark. Positions 74-88 are enriched in low complexity; sequence KSGSTATGTNTTTTQ. Residues 88-95 carry the Nuclear localization signal motif; the sequence is QRRTRKSQ. The chain crosses the membrane as a helical span at residues 106-128; sequence TVVRVFAKQFGALLLLVGLIQLI. At 129 to 455 the chain is on the perinuclear space side; it reads RKLTLKDSSL…ELDSVSVAHA (327 aa). Residues 201–225 adopt a coiled-coil conformation; sequence LHSELKKVESKTERLQVSVDELNAK. One can recognise an SUN domain in the interval 285-447; sequence GGAFVMGHSD…YRFRVHGREL (163 aa).

In terms of assembly, forms homomers (e.g. dimers, trimers and tetramers) and heteromers with SUN1. Interacts with SUN3, SUN4 and TIK. Core component of the LINC complex which is composed of inner nuclear membrane SUN domain-containing proteins coupled to outer nuclear membrane WIP and WIT proteins. The LINC complex also involves nucleoskeletal proteins CRWN/LINC and possibly KAKU4 and the cytoskeletal myosin KAKU1. Interacts with LINC1, WIP1, WIP2 and WIP3 at the nuclear envelope (NE). Interacts with SINE1, SINE2, SINE3 and SINE4. Interacts with NEAP1, NEA2 and NEAP3. Expressed in roots, hypocotyls, cotyledons and leaves and inflorescences.

It localises to the nucleus inner membrane. The protein localises to the cytoplasm. The protein resides in the cytoskeleton. It is found in the phragmoplast. Its subcellular location is the endoplasmic reticulum membrane. It localises to the nucleus envelope. Functionally, component of SUN-protein-containing multivariate complexes also called LINC complexes which link the nucleoskeleton and cytoskeleton by providing versatile outer nuclear membrane attachment sites for cytoskeletal filaments. Required for the maintenance and/or formation of polarized nuclear shape in root hairs. Modulates the anchoring and mobility of WIP proteins in the nuclear envelope (NE). In association with SUN1, may be involved in telomere attachment to nuclear envelope in the prophase of meiosis. As component of the SUN-WIP-WIT2-KAKU1 complex, mediates the transfer of cytoplasmic forces to the nuclear envelope (NE), leading to nuclear shape changes. The sequence is that of SUN domain-containing protein 2 from Arabidopsis thaliana (Mouse-ear cress).